Here is an 88-residue protein sequence, read N- to C-terminus: Cell division topological specificity factor (88 aa).

Belongs to the MinE family.

In terms of biological role, prevents the cell division inhibition by proteins MinC and MinD at internal division sites while permitting inhibition at polar sites. This ensures cell division at the proper site by restricting the formation of a division septum at the midpoint of the long axis of the cell. This chain is Cell division topological specificity factor, found in Clostridium kluyveri (strain ATCC 8527 / DSM 555 / NBRC 12016 / NCIMB 10680 / K1).